Consider the following 561-residue polypeptide: Mercuric reductase (561 aa).

The HMA domain maps to 1-65 (MTTLKITGMT…AVAGLGYEAT (65 aa)). A metal cation-binding residues include Cys11 and Cys14. FAD-binding residues include Ala110, Gly130, and Thr135. Residues Cys136 and Cys141 are joined by a disulfide bond. Lys145, Ala211, Asp403, and Val411 together coordinate FAD. Cys558 and Cys559 together coordinate Hg(2+).

It belongs to the class-I pyridine nucleotide-disulfide oxidoreductase family. Homodimer. FAD is required as a cofactor.

The catalysed reaction is Hg + NADP(+) + H(+) = Hg(2+) + NADPH. In terms of biological role, resistance to Hg(2+) in bacteria appears to be governed by a specialized system which includes mercuric reductase. MerA protein is responsible for volatilizing mercury as Hg(0). This chain is Mercuric reductase (merA), found in Enterobacter agglomerans (Erwinia herbicola).